The sequence spans 509 residues: Scavenger receptor class B member 1 (509 aa).

At 1–11 (MGNLSRARRVT) the chain is on the cytoplasmic side. Residues 12 to 32 (AALGFIGLLFAVLGIIMIVMV) traverse the membrane as a helical segment. The Extracellular portion of the chain corresponds to 33-440 (PSIIKQQVLK…YIQLVLMPKV (408 aa)). Asparagine 102, asparagine 108, asparagine 173, asparagine 212, asparagine 227, asparagine 255, asparagine 310, asparagine 330, and asparagine 383 each carry an N-linked (GlcNAc...) asparagine glycan. A disulfide bond links cysteine 251 and cysteine 384. The chain crosses the membrane as a helical span at residues 441 to 461 (LHYAQYVLLALGCVLLLIPII). The Cytoplasmic segment spans residues 462–509 (YQIRSQEKCYLFWISFKKGSKDKEAVQAYSEFLMTSAPKGTVLQEARL).

The protein belongs to the CD36 family. N-glycosylated. In terms of processing, the six cysteines of the extracellular domain are all involved in intramolecular disulfide bonds.

The protein localises to the cell membrane. It localises to the membrane. Its subcellular location is the caveola. In terms of biological role, receptor for different ligands such as phospholipids, cholesterol ester, lipoproteins, phosphatidylserine and apoptotic cells. Receptor for HDL, mediating selective uptake of cholesteryl ether and HDL-dependent cholesterol efflux. Also facilitates the flux of free and esterified cholesterol between the cell surface and apoB-containing lipoproteins and modified lipoproteins, although less efficiently than HDL. May be involved in the phagocytosis of apoptotic cells, via its phosphatidylserine binding activity. In Bos taurus (Bovine), this protein is Scavenger receptor class B member 1 (SCARB1).